Here is a 156-residue protein sequence, read N- to C-terminus: Small ribosomal subunit protein uS7 (156 aa).

The protein belongs to the universal ribosomal protein uS7 family. In terms of assembly, part of the 30S ribosomal subunit. Contacts proteins S9 and S11.

Functionally, one of the primary rRNA binding proteins, it binds directly to 16S rRNA where it nucleates assembly of the head domain of the 30S subunit. Is located at the subunit interface close to the decoding center, probably blocks exit of the E-site tRNA. The polypeptide is Small ribosomal subunit protein uS7 (Clostridium botulinum (strain 657 / Type Ba4)).